The sequence spans 144 residues: Large ribosomal subunit protein uL11 (144 aa).

This sequence belongs to the universal ribosomal protein uL11 family. Part of the ribosomal stalk of the 50S ribosomal subunit. Interacts with L10 and the large rRNA to form the base of the stalk. L10 forms an elongated spine to which L12 dimers bind in a sequential fashion forming a multimeric L10(L12)X complex. Post-translationally, one or more lysine residues are methylated.

Its function is as follows. Forms part of the ribosomal stalk which helps the ribosome interact with GTP-bound translation factors. This chain is Large ribosomal subunit protein uL11, found in Neisseria gonorrhoeae (strain ATCC 700825 / FA 1090).